Here is a 394-residue protein sequence, read N- to C-terminus: Endothelial cell-selective adhesion molecule (394 aa).

Positions 1 to 29 are cleaved as a signal peptide; the sequence is MILQAGTPETSLLRVLFLGLSTLAAFSRA. Over 30-251 the chain is Extracellular; it reads QMELHVPPGL…LDVMTGSKAA (222 aa). Residues 37–146 enclose the Ig-like V-type domain; the sequence is PGLNKLEAVE…EGKSIGHSIK (110 aa). N111, N172, N216, and N239 each carry an N-linked (GlcNAc...) asparagine glycan. The Ig-like C2-type domain occupies 159-243; sequence PSCSLQGVPY…GFAKCNVTLD (85 aa). A disulfide bond links C177 and C227. The chain crosses the membrane as a helical span at residues 252–272; that stretch reads VVAGAVVGTFVGLVLIAGLVL. Residues 273–394 lie on the Cytoplasmic side of the membrane; sequence LYQRRSKTLE…PAQSQAGSLV (122 aa). The residue at position 304 (S304) is a Phosphoserine. Composition is skewed to polar residues over residues 304-318 and 335-347; these read SDTI…SVTS and FTPT…QALS. Residues 304–372 are disordered; that stretch reads SDTISKNGTL…SLTPGGVSSS (69 aa). Phosphothreonine occurs at positions 336 and 338. A phosphoserine mark is found at S340, S343, S348, and S375.

In terms of assembly, interacts with MAGI1. In terms of tissue distribution, highly expressed in the heart and lung. Weakly expressed in the kidney and skin. Expression is restricted to the vascular endothelial cells. Expressed in the kidney, heart and tongue (at protein level). Also expressed on megakaryocytes and activated platelets.

It is found in the cell junction. It localises to the adherens junction. The protein resides in the tight junction. Its subcellular location is the cell membrane. Functionally, can mediate aggregation most likely through a homophilic molecular interaction. The polypeptide is Endothelial cell-selective adhesion molecule (Esam) (Mus musculus (Mouse)).